Reading from the N-terminus, the 295-residue chain is Ribosomal protein L11 methyltransferase (295 aa).

Threonine 145, glycine 166, aspartate 188, and asparagine 230 together coordinate S-adenosyl-L-methionine.

This sequence belongs to the methyltransferase superfamily. PrmA family.

It localises to the cytoplasm. It carries out the reaction L-lysyl-[protein] + 3 S-adenosyl-L-methionine = N(6),N(6),N(6)-trimethyl-L-lysyl-[protein] + 3 S-adenosyl-L-homocysteine + 3 H(+). Its function is as follows. Methylates ribosomal protein L11. The protein is Ribosomal protein L11 methyltransferase of Pectobacterium carotovorum subsp. carotovorum (strain PC1).